Reading from the N-terminus, the 248-residue chain is tRNA (guanine-N(1)-)-methyltransferase (248 aa).

S-adenosyl-L-methionine is bound by residues Gly113 and 133-138 (IGDFVL).

This sequence belongs to the RNA methyltransferase TrmD family. Homodimer.

It is found in the cytoplasm. The enzyme catalyses guanosine(37) in tRNA + S-adenosyl-L-methionine = N(1)-methylguanosine(37) in tRNA + S-adenosyl-L-homocysteine + H(+). Its function is as follows. Specifically methylates guanosine-37 in various tRNAs. The chain is tRNA (guanine-N(1)-)-methyltransferase from Dehalococcoides mccartyi (strain ATCC BAA-2100 / JCM 16839 / KCTC 5957 / BAV1).